Reading from the N-terminus, the 618-residue chain is Dihydroxy-acid dehydratase (618 aa).

A Mg(2+)-binding site is contributed by aspartate 81. Cysteine 122 is a [2Fe-2S] cluster binding site. The Mg(2+) site is built by aspartate 123 and lysine 124. N6-carboxylysine is present on lysine 124. Cysteine 195 serves as a coordination point for [2Fe-2S] cluster. Glutamate 491 contributes to the Mg(2+) binding site. Catalysis depends on serine 517, which acts as the Proton acceptor.

This sequence belongs to the IlvD/Edd family. Homodimer. Requires [2Fe-2S] cluster as cofactor. It depends on Mg(2+) as a cofactor.

The enzyme catalyses (2R)-2,3-dihydroxy-3-methylbutanoate = 3-methyl-2-oxobutanoate + H2O. The catalysed reaction is (2R,3R)-2,3-dihydroxy-3-methylpentanoate = (S)-3-methyl-2-oxopentanoate + H2O. It functions in the pathway amino-acid biosynthesis; L-isoleucine biosynthesis; L-isoleucine from 2-oxobutanoate: step 3/4. Its pathway is amino-acid biosynthesis; L-valine biosynthesis; L-valine from pyruvate: step 3/4. In terms of biological role, functions in the biosynthesis of branched-chain amino acids. Catalyzes the dehydration of (2R,3R)-2,3-dihydroxy-3-methylpentanoate (2,3-dihydroxy-3-methylvalerate) into 2-oxo-3-methylpentanoate (2-oxo-3-methylvalerate) and of (2R)-2,3-dihydroxy-3-methylbutanoate (2,3-dihydroxyisovalerate) into 2-oxo-3-methylbutanoate (2-oxoisovalerate), the penultimate precursor to L-isoleucine and L-valine, respectively. This is Dihydroxy-acid dehydratase from Dechloromonas aromatica (strain RCB).